The primary structure comprises 414 residues: Glucose-1-phosphate adenylyltransferase (414 aa).

Alpha-D-glucose 1-phosphate is bound by residues Y103, G168, E183–K184, and S201.

This sequence belongs to the bacterial/plant glucose-1-phosphate adenylyltransferase family. As to quaternary structure, homotetramer.

It catalyses the reaction alpha-D-glucose 1-phosphate + ATP + H(+) = ADP-alpha-D-glucose + diphosphate. It participates in glycan biosynthesis; glycogen biosynthesis. Its function is as follows. Involved in the biosynthesis of ADP-glucose, a building block required for the elongation reactions to produce glycogen. Catalyzes the reaction between ATP and alpha-D-glucose 1-phosphate (G1P) to produce pyrophosphate and ADP-Glc. This chain is Glucose-1-phosphate adenylyltransferase, found in Thermus thermophilus (strain ATCC 27634 / DSM 579 / HB8).